Consider the following 323-residue polypeptide: Beta-ketoacyl-[acyl-carrier-protein] synthase III (323 aa).

Active-site residues include cysteine 113 and histidine 250. The ACP-binding stretch occupies residues 251–255 (QANRR). Asparagine 280 is a catalytic residue.

It belongs to the thiolase-like superfamily. FabH family. Homodimer.

Its subcellular location is the cytoplasm. The enzyme catalyses malonyl-[ACP] + acetyl-CoA + H(+) = 3-oxobutanoyl-[ACP] + CO2 + CoA. It participates in lipid metabolism; fatty acid biosynthesis. Catalyzes the condensation reaction of fatty acid synthesis by the addition to an acyl acceptor of two carbons from malonyl-ACP. Catalyzes the first condensation reaction which initiates fatty acid synthesis and may therefore play a role in governing the total rate of fatty acid production. Possesses both acetoacetyl-ACP synthase and acetyl transacylase activities. Its substrate specificity determines the biosynthesis of branched-chain and/or straight-chain of fatty acids. The chain is Beta-ketoacyl-[acyl-carrier-protein] synthase III from Rhizobium rhizogenes (strain K84 / ATCC BAA-868) (Agrobacterium radiobacter).